The sequence spans 145 residues: Androgenic gland hormone (145 aa).

Positions 1–21 (MKGLLFIVSLLCLTLHQRVWA) are cleaved as a signal peptide. Cystine bridges form between cysteine 33/cysteine 122, cysteine 42/cysteine 59, cysteine 44/cysteine 140, and cysteine 123/cysteine 131. Residues 68-112 (SADDEDYLFEEDEDDEFFHPRALSPPAAKSGDERLEDEVSFHSRS) constitute a propeptide, c peptide. Asparagine 132 carries N-linked (GlcNAc...) asparagine glycosylation.

As to expression, androgenic gland.

It is found in the secreted. Its function is as follows. Controls sex differentiation and the formation of male appendages, spermatogenesis, pigmentation, and male specific behavior. This is Androgenic gland hormone (AGH) from Porcellio scaber (Common rough woodlouse).